A 347-amino-acid polypeptide reads, in one-letter code: GMP reductase (347 aa).

108-131 (ADFEKTKQILDLNPALNFVCIDVA) is an NADP(+) binding site. G181 and G183 together coordinate K(+). C186 functions as the Thioimidate intermediate in the catalytic mechanism. 216-239 (IVSDGGCTTPGDVAKAFGGGADFV) lines the NADP(+) pocket.

This sequence belongs to the IMPDH/GMPR family. GuaC type 1 subfamily. As to quaternary structure, homotetramer.

The enzyme catalyses IMP + NH4(+) + NADP(+) = GMP + NADPH + 2 H(+). Functionally, catalyzes the irreversible NADPH-dependent deamination of GMP to IMP. It functions in the conversion of nucleobase, nucleoside and nucleotide derivatives of G to A nucleotides, and in maintaining the intracellular balance of A and G nucleotides. The polypeptide is GMP reductase (Escherichia coli O7:K1 (strain IAI39 / ExPEC)).